Here is a 269-residue protein sequence, read N- to C-terminus: Intron-associated endonuclease 3 (269 aa).

Functionally, this endonuclease is specific to the nrdB gene splice junction and is involved in intron homing. In Enterobacteria phage RB3 (Bacteriophage RB3), this protein is Intron-associated endonuclease 3 (ITEVIIIR).